A 447-amino-acid polypeptide reads, in one-letter code: ATP-dependent protease ATPase subunit HslU (447 aa).

ATP-binding positions include I17, 59–64 (GVGKTE), D256, E321, and R393.

The protein belongs to the ClpX chaperone family. HslU subfamily. A double ring-shaped homohexamer of HslV is capped on each side by a ring-shaped HslU homohexamer. The assembly of the HslU/HslV complex is dependent on binding of ATP.

Its subcellular location is the cytoplasm. Functionally, ATPase subunit of a proteasome-like degradation complex; this subunit has chaperone activity. The binding of ATP and its subsequent hydrolysis by HslU are essential for unfolding of protein substrates subsequently hydrolyzed by HslV. HslU recognizes the N-terminal part of its protein substrates and unfolds these before they are guided to HslV for hydrolysis. The protein is ATP-dependent protease ATPase subunit HslU of Pseudomonas putida (strain GB-1).